Here is a 160-residue protein sequence, read N- to C-terminus: Salivary gland broad-spectrum antiviral protein (160 aa).

Residues 17 to 37 (VALGLYFTVVVFVLFITSVNL) traverse the membrane as a helical segment. 2 N-linked (GlcNAc...) asparagine glycosylation sites follow: N62 and N145.

In terms of tissue distribution, salivary gland (at protein level).

It is found in the membrane. In terms of biological role, (Microbial infection) Modulates replication of Zika virus in salivary glands. (Microbial infection) Modulates replication of dengue virus type 2 in salivary glands. Functionally, (Microbial infection) Modulates replication of chikungunya virus in salivary glands. The sequence is that of Salivary gland broad-spectrum antiviral protein from Aedes aegypti (Yellowfever mosquito).